Reading from the N-terminus, the 211-residue chain is Homeobox protein Rhox5 (211 aa).

A disordered region spans residues 38 to 129; the sequence is FFQAGEGRDE…PLRRPGSTQR (92 aa). 2 stretches are compositionally biased toward gly residues: residues 52-62 and 70-84; these read GQPGEGAVGTE and GGEG…GPVG. Over residues 102–119 the composition is skewed to basic and acidic residues; the sequence is HEPVAEGTESVKSEDKQM. A DNA-binding region (homeobox; atypical) is located at residues 119–176; it reads MPLRRPGSTQRRLAELERILLSSGSSSGGRSLIDGWISVCPECRNWFKIRRAAYRRNR.

Highly expressed in placenta. Lower levels in testis, epididymis, ovary and skeletal muscle.

The protein localises to the nucleus. In terms of biological role, transcription factor required for differentiation of embryonic stem cells (ESCs) into primordial germ cells. This chain is Homeobox protein Rhox5 (Rhox5), found in Rattus norvegicus (Rat).